A 233-amino-acid polypeptide reads, in one-letter code: Large ribosomal subunit protein uL1 (233 aa).

Belongs to the universal ribosomal protein uL1 family. In terms of assembly, part of the 50S ribosomal subunit.

Binds directly to 23S rRNA. The L1 stalk is quite mobile in the ribosome, and is involved in E site tRNA release. Its function is as follows. Protein L1 is also a translational repressor protein, it controls the translation of the L11 operon by binding to its mRNA. The polypeptide is Large ribosomal subunit protein uL1 (Nautilia profundicola (strain ATCC BAA-1463 / DSM 18972 / AmH)).